Consider the following 256-residue polypeptide: Type III pantothenate kinase (256 aa).

D6–V13 serves as a coordination point for ATP. Substrate contacts are provided by residues Y100 and G107–R110. D109 functions as the Proton acceptor in the catalytic mechanism. A K(+)-binding site is contributed by D129. Residue T132 coordinates ATP. T184 is a binding site for substrate.

It belongs to the type III pantothenate kinase family. As to quaternary structure, homodimer. The cofactor is NH4(+). K(+) is required as a cofactor.

Its subcellular location is the cytoplasm. It catalyses the reaction (R)-pantothenate + ATP = (R)-4'-phosphopantothenate + ADP + H(+). The protein operates within cofactor biosynthesis; coenzyme A biosynthesis; CoA from (R)-pantothenate: step 1/5. In terms of biological role, catalyzes the phosphorylation of pantothenate (Pan), the first step in CoA biosynthesis. The chain is Type III pantothenate kinase from Myxococcus xanthus (strain DK1622).